The chain runs to 434 residues: Beta-enolase (434 aa).

A2 bears the N-acetylalanine mark. A Phosphothreonine modification is found at T72. Residues S83 and S157 each carry the phosphoserine modification. Positions 158 and 167 each coordinate substrate. The residue at position 176 (S176) is a Phosphoserine. T205 is subject to Phosphothreonine. Catalysis depends on E210, which acts as the Proton donor. T229 carries the phosphothreonine modification. Y236 is subject to Phosphotyrosine. D245 is a Mg(2+) binding site. S263 is subject to Phosphoserine. E293 and D318 together coordinate substrate. E293 and D318 together coordinate Mg(2+). K343 functions as the Proton acceptor in the catalytic mechanism. Residues 370–373 (SHRS) and K394 contribute to the substrate site.

Belongs to the enolase family. As to quaternary structure, mammalian enolase is composed of 3 isozyme subunits, alpha, beta and gamma, which can form homodimers or heterodimers which are cell-type and development-specific. Interacts with PNKD. Mg(2+) serves as cofactor. The alpha/alpha homodimer is expressed in embryo and in most adult tissues. The alpha/beta heterodimer and the beta/beta homodimer are found in striated muscle, and the alpha/gamma heterodimer and the gamma/gamma homodimer in neurons.

It localises to the cytoplasm. The catalysed reaction is (2R)-2-phosphoglycerate = phosphoenolpyruvate + H2O. It participates in carbohydrate degradation; glycolysis; pyruvate from D-glyceraldehyde 3-phosphate: step 4/5. Its function is as follows. Glycolytic enzyme that catalyzes the conversion of 2-phosphoglycerate to phosphoenolpyruvate. Appears to have a function in striated muscle development and regeneration. The chain is Beta-enolase (Eno3) from Rattus norvegicus (Rat).